A 73-amino-acid polypeptide reads, in one-letter code: UPF0235 protein PCC7424_0673 (73 aa).

This sequence belongs to the UPF0235 family.

In Gloeothece citriformis (strain PCC 7424) (Cyanothece sp. (strain PCC 7424)), this protein is UPF0235 protein PCC7424_0673.